A 494-amino-acid chain; its full sequence is Aspartyl/glutamyl-tRNA(Asn/Gln) amidotransferase subunit B (494 aa).

It belongs to the GatB/GatE family. GatB subfamily. Heterotrimer of A, B and C subunits.

The enzyme catalyses L-glutamyl-tRNA(Gln) + L-glutamine + ATP + H2O = L-glutaminyl-tRNA(Gln) + L-glutamate + ADP + phosphate + H(+). It catalyses the reaction L-aspartyl-tRNA(Asn) + L-glutamine + ATP + H2O = L-asparaginyl-tRNA(Asn) + L-glutamate + ADP + phosphate + 2 H(+). Allows the formation of correctly charged Asn-tRNA(Asn) or Gln-tRNA(Gln) through the transamidation of misacylated Asp-tRNA(Asn) or Glu-tRNA(Gln) in organisms which lack either or both of asparaginyl-tRNA or glutaminyl-tRNA synthetases. The reaction takes place in the presence of glutamine and ATP through an activated phospho-Asp-tRNA(Asn) or phospho-Glu-tRNA(Gln). This is Aspartyl/glutamyl-tRNA(Asn/Gln) amidotransferase subunit B from Protochlamydia amoebophila (strain UWE25).